Consider the following 377-residue polypeptide: Putative efflux system component YknX (377 aa).

Residues 3-23 (KVWIGIGIAVIVALFVGINIY) traverse the membrane as a helical segment. Residues 95 to 187 (TNEQLSLEKE…RVSDLEVKSE (93 aa)) adopt a coiled-coil conformation.

Belongs to the membrane fusion protein (MFP) (TC 8.A.1) family. As to quaternary structure, part of a complex composed of YknX, YknY and YknZ. The complex interacts with YknW.

Its subcellular location is the cell membrane. Its function is as follows. Part of an unusual four-component transporter, which is required for protection against the killing factor SdpC (sporulation-delaying protein). The polypeptide is Putative efflux system component YknX (yknX) (Bacillus subtilis (strain 168)).